The primary structure comprises 341 residues: Anthranilate phosphoribosyltransferase (341 aa).

5-phospho-alpha-D-ribose 1-diphosphate is bound by residues Gly79, 82–83, Thr87, 89–92, 107–115, and Ala119; these read GD, NIST, and KHGNRAASS. Residue Gly79 participates in anthranilate binding. Ser91 provides a ligand contact to Mg(2+). Asn110 is an anthranilate binding site. Residue Arg165 coordinates anthranilate. 2 residues coordinate Mg(2+): Asp224 and Glu225.

It belongs to the anthranilate phosphoribosyltransferase family. As to quaternary structure, homodimer. Requires Mg(2+) as cofactor.

It carries out the reaction N-(5-phospho-beta-D-ribosyl)anthranilate + diphosphate = 5-phospho-alpha-D-ribose 1-diphosphate + anthranilate. Its pathway is amino-acid biosynthesis; L-tryptophan biosynthesis; L-tryptophan from chorismate: step 2/5. In terms of biological role, catalyzes the transfer of the phosphoribosyl group of 5-phosphorylribose-1-pyrophosphate (PRPP) to anthranilate to yield N-(5'-phosphoribosyl)-anthranilate (PRA). This is Anthranilate phosphoribosyltransferase from Lacticaseibacillus paracasei (strain ATCC 334 / BCRC 17002 / CCUG 31169 / CIP 107868 / KCTC 3260 / NRRL B-441) (Lactobacillus paracasei).